We begin with the raw amino-acid sequence, 392 residues long: Gastricsin (392 aa).

The N-terminal stretch at 1-16 is a signal peptide; sequence MKWMVVALLCLPLLEA. The propeptide at 17 to 62 is activation peptide; it reads SLLRVPLRKMKSIRETMKEQGVLKDFLKTHKYDPGQKYHFGNFGDY. The region spanning 76–389 is the Peptidase A1 domain; sequence YFGEISIGTP…DMGNNKVGLA (314 aa). Aspartate 94 is a catalytic residue. 2 disulfides stabilise this stretch: cysteine 107–cysteine 112 and cysteine 270–cysteine 275. Aspartate 280 is an active-site residue. A disulfide bridge links cysteine 314 with cysteine 347.

Belongs to the peptidase A1 family.

It is found in the secreted. It catalyses the reaction More restricted specificity than pepsin A, but shows preferential cleavage at Tyr-|-Xaa bonds. High activity on hemoglobin.. Its function is as follows. Hydrolyzes a variety of proteins. This Rattus norvegicus (Rat) protein is Gastricsin (Pgc).